A 202-amino-acid polypeptide reads, in one-letter code: MDPQLPEPEPLIALIEALRRLPGVGVRSARRMAYHLLQHDLQGADMLGRALSAAVQHLRHCARCNSFTEDEVCATCANPKRDPGLLCIVETPADQNMIESSHGYRGLYYVLMGRIAPLEGVGPRELDFQRVIERACDGVVQEVILATNFTAEGETTAHFLDDALSERGLKVTRLARGVPAGSELEYVDAGTIAWALMERRST.

A C4-type zinc finger spans residues 61-76 (CARCNSFTEDEVCATC). In terms of domain architecture, Toprim spans 84 to 179 (GLLCIVETPA…KVTRLARGVP (96 aa)).

The protein belongs to the RecR family.

Its function is as follows. May play a role in DNA repair. It seems to be involved in an RecBC-independent recombinational process of DNA repair. It may act with RecF and RecO. This is Recombination protein RecR from Bordetella pertussis (strain Tohama I / ATCC BAA-589 / NCTC 13251).